The chain runs to 630 residues: UvrABC system protein C (630 aa).

A disordered region spans residues M1 to G96. The span at E9–H28 shows a compositional bias: low complexity. Residues D52–V125 enclose the GIY-YIG domain. Positions R75–R91 are enriched in basic and acidic residues. One can recognise a UVR domain in the interval D234–F269.

Belongs to the UvrC family. Interacts with UvrB in an incision complex.

It is found in the cytoplasm. The UvrABC repair system catalyzes the recognition and processing of DNA lesions. UvrC both incises the 5' and 3' sides of the lesion. The N-terminal half is responsible for the 3' incision and the C-terminal half is responsible for the 5' incision. The chain is UvrABC system protein C from Thermus thermophilus (strain ATCC BAA-163 / DSM 7039 / HB27).